An 815-amino-acid chain; its full sequence is Phenylalanine--tRNA ligase beta subunit (815 aa).

One can recognise a tRNA-binding domain in the interval S39 to T148. Residues P421 to S496 form the B5 domain. Residues D474, D480, E483, and E484 each coordinate Mg(2+). Positions S721–R814 constitute an FDX-ACB domain.

Belongs to the phenylalanyl-tRNA synthetase beta subunit family. Type 1 subfamily. In terms of assembly, tetramer of two alpha and two beta subunits. Mg(2+) serves as cofactor.

It is found in the cytoplasm. It carries out the reaction tRNA(Phe) + L-phenylalanine + ATP = L-phenylalanyl-tRNA(Phe) + AMP + diphosphate + H(+). The polypeptide is Phenylalanine--tRNA ligase beta subunit (pheT) (Rickettsia prowazekii (strain Madrid E)).